A 410-amino-acid polypeptide reads, in one-letter code: MDKLLDRFLNYVSFDTQSKSGVRQVPSTDGQLKLARALQQELLELGFEQVVLSKQGCLMATLPANVAWPVPAIGFISHMDTSPDFSGKNVNPQILENYRGGDIALGVGDEVLSPVMFPVLHQLLGHTLITTDGKTLLGADDKAGIAEIMTALVRLKKSQLPHGDIRVAFTPDEEIGKGAQFFDVKAFNAQWAYTVDGGGVGELEYENFNAASVQVKIVGNNVHPGSAKGVMVNALTLASRYHQQVPESQSPEQTDGYQGFYHLHSMKGSVERADLHYIVRDFDRNGFEQRKQTMLDIAEKVGAGLHPDCYIEVTITDTYYNMREQVEQHPHIIALAQQAMRDCDIEPNMKPIRGGTDGAHLSFQGLPCPNLFTGGYNYHGKHEFVTLEGMEKAVSVIMRIAELTALRAKP.

His78 contacts Zn(2+). Residue Asp80 is part of the active site. Asp140 serves as a coordination point for Zn(2+). Glu173 acts as the Proton acceptor in catalysis. 3 residues coordinate Zn(2+): Glu174, Asp196, and His379.

The protein belongs to the peptidase M20B family. Requires Zn(2+) as cofactor.

The protein resides in the cytoplasm. The catalysed reaction is Release of the N-terminal residue from a tripeptide.. Cleaves the N-terminal amino acid of tripeptides. This is Peptidase T from Pectobacterium carotovorum subsp. carotovorum (strain PC1).